The following is a 419-amino-acid chain: Tyrosine--tRNA ligase 2 (419 aa).

Tyr-34 serves as a coordination point for L-tyrosine. Positions 39–48 (PTGDSMHIGH) match the 'HIGH' region motif. Positions 168 and 172 each coordinate L-tyrosine. A 'KMSKS' region motif is present at residues 230-234 (KFGKS). Lys-233 is a binding site for ATP. Residues 352–418 (KNIVEWLVDL…GKKNYSLVKL (67 aa)) form the S4 RNA-binding domain.

It belongs to the class-I aminoacyl-tRNA synthetase family. TyrS type 1 subfamily. In terms of assembly, homodimer.

It is found in the cytoplasm. The catalysed reaction is tRNA(Tyr) + L-tyrosine + ATP = L-tyrosyl-tRNA(Tyr) + AMP + diphosphate + H(+). Its function is as follows. Catalyzes the attachment of tyrosine to tRNA(Tyr) in a two-step reaction: tyrosine is first activated by ATP to form Tyr-AMP and then transferred to the acceptor end of tRNA(Tyr). The chain is Tyrosine--tRNA ligase 2 from Bacillus thuringiensis subsp. konkukian (strain 97-27).